The primary structure comprises 193 residues: Ion-translocating oxidoreductase complex subunit A (193 aa).

6 consecutive transmembrane segments (helical) span residues 4-24, 39-59, 71-91, 102-122, 134-154, and 167-187; these read FFFI…KFLG, IGMG…SWMV, FLRI…IEVV, ALGI…VALL, LLYG…FAGM, and FAGA…FMGF.

Belongs to the NqrDE/RnfAE family. In terms of assembly, the complex is composed of six subunits: RnfA, RnfB, RnfC, RnfD, RnfE and RnfG.

Its subcellular location is the cellular chromatophore membrane. Functionally, part of a membrane-bound complex that couples electron transfer with translocation of ions across the membrane. This chain is Ion-translocating oxidoreductase complex subunit A, found in Cereibacter sphaeroides (strain ATCC 17029 / ATH 2.4.9) (Rhodobacter sphaeroides).